The chain runs to 499 residues: Glycerol kinase (499 aa).

Thr-17 provides a ligand contact to ADP. 3 residues coordinate ATP: Thr-17, Thr-18, and Ser-19. Position 17 (Thr-17) interacts with sn-glycerol 3-phosphate. Arg-21 serves as a coordination point for ADP. 4 residues coordinate sn-glycerol 3-phosphate: Arg-87, Glu-88, Tyr-139, and Asp-243. Positions 87, 88, 139, 243, and 244 each coordinate glycerol. Residues Thr-265 and Gly-308 each contribute to the ADP site. Positions 265, 308, 312, and 409 each coordinate ATP. The ADP site is built by Gly-409 and Asn-413.

Belongs to the FGGY kinase family.

It catalyses the reaction glycerol + ATP = sn-glycerol 3-phosphate + ADP + H(+). The protein operates within polyol metabolism; glycerol degradation via glycerol kinase pathway; sn-glycerol 3-phosphate from glycerol: step 1/1. Its activity is regulated as follows. Inhibited by fructose 1,6-bisphosphate (FBP). Key enzyme in the regulation of glycerol uptake and metabolism. Catalyzes the phosphorylation of glycerol to yield sn-glycerol 3-phosphate. The polypeptide is Glycerol kinase (Pseudomonas putida (strain GB-1)).